The sequence spans 426 residues: Glutamate-1-semialdehyde 2,1-aminomutase (426 aa).

An N6-(pyridoxal phosphate)lysine modification is found at Lys-265.

Belongs to the class-III pyridoxal-phosphate-dependent aminotransferase family. HemL subfamily. In terms of assembly, homodimer. Pyridoxal 5'-phosphate is required as a cofactor.

It is found in the cytoplasm. The catalysed reaction is (S)-4-amino-5-oxopentanoate = 5-aminolevulinate. The protein operates within porphyrin-containing compound metabolism; protoporphyrin-IX biosynthesis; 5-aminolevulinate from L-glutamyl-tRNA(Glu): step 2/2. In Neisseria gonorrhoeae (strain ATCC 700825 / FA 1090), this protein is Glutamate-1-semialdehyde 2,1-aminomutase.